We begin with the raw amino-acid sequence, 78 residues long: MATGTPAAELRELSEDELVTRLRESKEELFNLRFQMATGQMDNNRRLRTVRHEIARIYTVLRERELGLAVGPDAGDAA.

Belongs to the universal ribosomal protein uL29 family.

This Rhodococcus erythropolis (strain PR4 / NBRC 100887) protein is Large ribosomal subunit protein uL29.